We begin with the raw amino-acid sequence, 278 residues long: Large ribosomal subunit protein uL2 (278 aa).

Residues 201 to 278 (HGNINDGKAG…IMRSRHQRKK (78 aa)) form a disordered region. Residues 210–221 (GRSRWRGKRPHV) show a composition bias toward basic residues.

It belongs to the universal ribosomal protein uL2 family. In terms of assembly, part of the 50S ribosomal subunit. Forms a bridge to the 30S subunit in the 70S ribosome.

One of the primary rRNA binding proteins. Required for association of the 30S and 50S subunits to form the 70S ribosome, for tRNA binding and peptide bond formation. It has been suggested to have peptidyltransferase activity; this is somewhat controversial. Makes several contacts with the 16S rRNA in the 70S ribosome. This is Large ribosomal subunit protein uL2 from Agrobacterium fabrum (strain C58 / ATCC 33970) (Agrobacterium tumefaciens (strain C58)).